The chain runs to 389 residues: MEVAGYGTHNRDLKQWMVTLLSALSLMMVVVTIGLLALFLVFDIQVNSNSGQKSSNQLKDLQETNENLVDEIFIDSALNNRYIKNHVVGLTPEEDDTKADIVMVFQPPATGRRTVGKKTHHSILDQKTRNARALPADVSLVQVKDCGKRAIPLIANRIVSGNPAAKGAWPWQVSLQRSNIHQCGGTLIGNMWVVTAAHCFRTNSNPRQWTLSFGTTINPPLMKRDVRRIIMHERYRPPARDHDIALVQFSPRVTFSDEVRRICLPEPSASFPPNSTVYITGFGALYYGGESQNELREARVQIISNDICKKRHVYGNEIKRGMFCAGFLEGNYDACRGDSGGPLVIRDNKDTWYLIGIVSWGDNCGQKNKPGVYTQVTYYRHWIASKTGL.

Over 1-23 (MEVAGYGTHNRDLKQWMVTLLSA) the chain is Cytoplasmic. Residues 24 to 44 (LSLMMVVVTIGLLALFLVFDI) form a helical; Signal-anchor for type II membrane protein membrane-spanning segment. The region spanning 31-148 (VTIGLLALFL…SLVQVKDCGK (118 aa)) is the SEA domain. Residues 45–389 (QVNSNSGQKS…RHWIASKTGL (345 aa)) are Extracellular-facing. In terms of domain architecture, Peptidase S1 spans 158-388 (IVSGNPAAKG…YRHWIASKTG (231 aa)). An intrachain disulfide couples cysteine 183 to cysteine 199. Catalysis depends on charge relay system residues histidine 198 and aspartate 243. Residue asparagine 274 is glycosylated (N-linked (GlcNAc...) asparagine). 2 disulfide bridges follow: cysteine 308–cysteine 324 and cysteine 335–cysteine 364. Residue serine 339 is the Charge relay system of the active site.

This sequence belongs to the peptidase S1 family.

It is found in the membrane. Its function is as follows. Probable serine protease which may play a role in cellular senescence. Overexpression inhibits cell growth and induce G1 cell cycle arrest. The chain is Transmembrane protease serine 11A (Tmprss11a) from Mus musculus (Mouse).